Consider the following 417-residue polypeptide: Neuropeptide FF receptor 2 (417 aa).

Residues 1 to 45 (MSEKWDSNSSESWNHIWSGNDTQHHWYSDINITYVNYYLHQPQVA) lie on the Extracellular side of the membrane. Residues Asn-8, Asn-20, and Asn-31 are each glycosylated (N-linked (GlcNAc...) asparagine). A helical transmembrane segment spans residues 46–66 (AVFISSYLLIFVLCMVGNTVV). The Cytoplasmic segment spans residues 67 to 82 (CFIVIRNRHMHTVTNF). Residues 83–103 (FILNLAISDLLVGIFCMPITL) form a helical membrane-spanning segment. Topologically, residues 104-119 (LDNIIAGWPFGSSMCK) are extracellular. Residues Cys-118 and Cys-206 are joined by a disulfide bond. The chain crosses the membrane as a helical span at residues 120–140 (ISGLVQGISVAASVFTLVAIA). The Cytoplasmic segment spans residues 141-160 (VDRFRCVVYPFKPKLTVKTA). Residues 161–181 (FVTIVIIWGLAIAIMTPSAIM) form a helical membrane-spanning segment. The Extracellular segment spans residues 182–217 (LHVQEEKYYRVRLSSHNKTSTVYWCREDWPRHEMRR). N-linked (GlcNAc...) asparagine glycosylation occurs at Asn-198. A helical transmembrane segment spans residues 218-238 (IYTTVLFATIYLAPLSLIVIM). Residues 239–274 (YARIGASLFKTAAHCTGKQRPVQWHVSKKKQKVIKM) lie on the Cytoplasmic side of the membrane. A helical membrane pass occupies residues 275–295 (LLTVALLFILSWLPLWTLMML). At 296 to 310 (SDYTDLSPNKLRIIN) the chain is on the extracellular side. Residues 311-331 (IYIYPFAHWLAFCNSSVNPII) form a helical membrane-spanning segment. Residues 332 to 417 (YGFFNENFRN…MGEATNSTVA (86 aa)) are Cytoplasmic-facing. A disordered region spans residues 382-401 (SQNPGGENLGCGKSADNPTQ).

This sequence belongs to the G-protein coupled receptor 1 family.

It localises to the cell membrane. In terms of biological role, receptor for NPAF (A-18-F-amide) and NPFF (F-8-F-amide) neuropeptides, also known as morphine-modulating peptides. Can also be activated by a variety of naturally occurring or synthetic FMRF-amide like ligands. This receptor mediates its action by association with G proteins that activate a phosphatidylinositol-calcium second messenger system. In Mus musculus (Mouse), this protein is Neuropeptide FF receptor 2 (Npffr2).